We begin with the raw amino-acid sequence, 466 residues long: Signal recognition particle 54 kDa protein (466 aa).

Residues 104-111 (GLQGSGKT), 184-188 (DTAGR), and 242-245 (TKLD) each bind GTP. The tract at residues 446–466 (QQQGGGGMGGLGGGGGLGPFG) is disordered. Residues 448-466 (QGGGGMGGLGGGGGLGPFG) show a composition bias toward gly residues.

The protein belongs to the GTP-binding SRP family. SRP54 subfamily. In terms of assembly, part of the signal recognition particle protein translocation system, which is composed of SRP and FtsY. Archaeal SRP consists of a 7S RNA molecule of 300 nucleotides and two protein subunits: SRP54 and SRP19.

It is found in the cytoplasm. It carries out the reaction GTP + H2O = GDP + phosphate + H(+). Involved in targeting and insertion of nascent membrane proteins into the cytoplasmic membrane. Binds to the hydrophobic signal sequence of the ribosome-nascent chain (RNC) as it emerges from the ribosomes. The SRP-RNC complex is then targeted to the cytoplasmic membrane where it interacts with the SRP receptor FtsY. The protein is Signal recognition particle 54 kDa protein of Haloquadratum walsbyi (strain DSM 16790 / HBSQ001).